We begin with the raw amino-acid sequence, 82 residues long: Probable tautomerase XF_1725 (82 aa).

Pro-2 serves as the catalytic Proton acceptor; via imino nitrogen.

It belongs to the 4-oxalocrotonate tautomerase family.

This chain is Probable tautomerase XF_1725, found in Xylella fastidiosa (strain 9a5c).